The primary structure comprises 115 residues: Phosphoribosyl-AMP cyclohydrolase (115 aa).

D80 is a binding site for Mg(2+). C81 contributes to the Zn(2+) binding site. D82 and D84 together coordinate Mg(2+). Residues C97 and C104 each contribute to the Zn(2+) site.

Belongs to the PRA-CH family. Homodimer. Requires Mg(2+) as cofactor. Zn(2+) serves as cofactor.

It is found in the cytoplasm. The catalysed reaction is 1-(5-phospho-beta-D-ribosyl)-5'-AMP + H2O = 1-(5-phospho-beta-D-ribosyl)-5-[(5-phospho-beta-D-ribosylamino)methylideneamino]imidazole-4-carboxamide. Its pathway is amino-acid biosynthesis; L-histidine biosynthesis; L-histidine from 5-phospho-alpha-D-ribose 1-diphosphate: step 3/9. Its function is as follows. Catalyzes the hydrolysis of the adenine ring of phosphoribosyl-AMP. This is Phosphoribosyl-AMP cyclohydrolase from Mycolicibacterium paratuberculosis (strain ATCC BAA-968 / K-10) (Mycobacterium paratuberculosis).